A 337-amino-acid polypeptide reads, in one-letter code: MRAPGFWWSVPTALPARLLAPLGRLYGGQVARRMARPGASAPLPVICVGNVTLGGAGKTPTALALAGLLREIGHEPAFLSRGYGGRLPGPVRVDPAQHGAAEVGDEPLLLARAAPTIVARDRPAGAALCAAADATAIIMDDGLQNPSLRKDWSIAVFDAGVGIGNGLAFPAGPLRAPLAAQWPHIDAVLIIGEGPAGEPVAADAVRRGLPVIRAQLRPEPGAAAALAGRPVLAFAGIGRPDKFFESLRAAGAEIRATRAFPDHHAYRAADLAGLERLARREGLTLVTTEKDRVRLPAAAPVTVLPVSLHFSEPDAALLRARLAALGPAPPDPRTRPD.

An ATP-binding site is contributed by Thr-52 to Thr-59.

It belongs to the LpxK family.

It catalyses the reaction a lipid A disaccharide + ATP = a lipid IVA + ADP + H(+). It participates in glycolipid biosynthesis; lipid IV(A) biosynthesis; lipid IV(A) from (3R)-3-hydroxytetradecanoyl-[acyl-carrier-protein] and UDP-N-acetyl-alpha-D-glucosamine: step 6/6. Transfers the gamma-phosphate of ATP to the 4'-position of a tetraacyldisaccharide 1-phosphate intermediate (termed DS-1-P) to form tetraacyldisaccharide 1,4'-bis-phosphate (lipid IVA). The polypeptide is Tetraacyldisaccharide 4'-kinase (Methylobacterium nodulans (strain LMG 21967 / CNCM I-2342 / ORS 2060)).